The primary structure comprises 238 residues: tRNA (guanine-N(1)-)-methyltransferase (238 aa).

Position 132 to 137 (132 to 137 (IGDYVL)) interacts with S-adenosyl-L-methionine.

It belongs to the RNA methyltransferase TrmD family. In terms of assembly, homodimer.

It localises to the cytoplasm. It catalyses the reaction guanosine(37) in tRNA + S-adenosyl-L-methionine = N(1)-methylguanosine(37) in tRNA + S-adenosyl-L-homocysteine + H(+). Functionally, specifically methylates guanosine-37 in various tRNAs. In Nitrobacter hamburgensis (strain DSM 10229 / NCIMB 13809 / X14), this protein is tRNA (guanine-N(1)-)-methyltransferase.